Consider the following 267-residue polypeptide: Shikimate dehydrogenase (NADP(+)) (267 aa).

Residues 14 to 16 (SLS) and threonine 61 each bind shikimate. Residue lysine 65 is the Proton acceptor of the active site. The shikimate site is built by asparagine 86 and aspartate 101. NADP(+) contacts are provided by residues 126–130 (GAGGA), 150–155 (NRTPFK), and leucine 213. Tyrosine 215 provides a ligand contact to shikimate. Glycine 236 is a binding site for NADP(+).

This sequence belongs to the shikimate dehydrogenase family. As to quaternary structure, homodimer.

It carries out the reaction shikimate + NADP(+) = 3-dehydroshikimate + NADPH + H(+). Its pathway is metabolic intermediate biosynthesis; chorismate biosynthesis; chorismate from D-erythrose 4-phosphate and phosphoenolpyruvate: step 4/7. Involved in the biosynthesis of the chorismate, which leads to the biosynthesis of aromatic amino acids. Catalyzes the reversible NADPH linked reduction of 3-dehydroshikimate (DHSA) to yield shikimate (SA). This Ruthia magnifica subsp. Calyptogena magnifica protein is Shikimate dehydrogenase (NADP(+)).